We begin with the raw amino-acid sequence, 1980 residues long: Sodium channel protein type 8 subunit alpha (1980 aa).

Disordered stretches follow at residues 1 to 20 (MAAR…FTPE) and 28 to 62 (RIAE…LEAG). The Cytoplasmic segment spans residues 1–132 (MAARLLAPPG…RIAIKILIHS (132 aa)). The segment covering 28–61 (RIAESKLKKPPKADGSHREDDEDSKPKPNSDLEA) has biased composition (basic and acidic residues). An I repeat occupies 114–442 (ILSPFNLIRR…KAMLEQLKKQ (329 aa)). The helical transmembrane segment at 133 to 151 (VFSMIIMCTILTNCVFMTF) threads the bilayer. Residues 152–158 (SNPPDWS) lie on the Extracellular side of the membrane. Residues 159-179 (KNVEYTFTGIYTFESLVKIIA) traverse the membrane as a helical segment. Over 180 to 193 (RGFCIDGFTFLRDP) the chain is Cytoplasmic. The helical transmembrane segment at 194 to 211 (WNWLDFSVIMMAYITEFV) threads the bilayer. Over 212–217 (NLGNVS) the chain is Extracellular. N-linked (GlcNAc...) asparagine glycosylation is present at N215. Residues 218-234 (ALRTFRVLRALKTISVI) form a helical membrane-spanning segment. The Cytoplasmic segment spans residues 235–253 (PGLKTIVGALIQSVKKLSD). Residues 254–273 (VMILTVFCLSVFALIGLQLF) form a helical membrane-spanning segment. The Extracellular portion of the chain corresponds to 274–355 (MGNLRNKCVV…PNYGYTSFDT (82 aa)). C281 and C333 form a disulfide bridge. N289, N295, and N308 each carry an N-linked (GlcNAc...) asparagine glycan. N326 carries an N-linked (GlcNAc...) (high mannose) asparagine glycan. The pore-forming intramembrane region spans 356–380 (FSWAFLALFRLMTQDYWENLYQLTL). E373 is a binding site for Na(+). The Extracellular portion of the chain corresponds to 381–387 (RAAGKTY). A helical membrane pass occupies residues 388–408 (MIFFVLVIFVGSFYLVNLILA). Residues 409 to 753 (VVAMAYEEQN…EIVNLIVMDP (345 aa)) lie on the Cytoplasmic side of the membrane. Disordered stretches follow at residues 446-530 (AQAA…KAFR) and 568-602 (FRGP…DSLF). Over residues 474–486 (PRSSSEISKLSSK) the composition is skewed to low complexity. Residues 489–500 (KERRNRRKKRKQ) show a composition bias toward basic residues. 2 stretches are compositionally biased toward basic and acidic residues: residues 501–530 (KELS…KAFR) and 586–602 (DEHS…DSLF). Residues S518 and S520 each carry the phosphoserine modification. One copy of the II repeat lies at 735 to 1007 (CHPYWIKLKE…QISVIRIKKG (273 aa)). Residues 754–772 (FVDLAITICIVLNTLFMAM) traverse the membrane as a helical segment. Over 773 to 783 (EHHPMTPQFEH) the chain is Extracellular. The chain crosses the membrane as a helical span at residues 784 to 803 (VLAVGNLVFTGIFTAEMFLK). Residues 804–817 (LIAMDPYYYFQEGW) lie on the Cytoplasmic side of the membrane. Residues 818-837 (NIFDGFIVSLSLMELSLADV) form a helical membrane-spanning segment. Topologically, residues 838–839 (EG) are extracellular. Residues 840 to 857 (LSVLRSFRLLRVFKLAKS) form a helical membrane-spanning segment. Residues 858 to 873 (WPTLNMLIKIIGNSVG) lie on the Cytoplasmic side of the membrane. A helical transmembrane segment spans residues 874–892 (ALGNLTLVLAIIVFIFAVV). Topologically, residues 893–921 (GMQLFGKSYKECVCKINQDCELPRWHMHD) are extracellular. A disulfide bond links C906 and C912. The segment at residues 922–942 (FFHSFLIVFRVLCGEWIETMW) is an intramembrane region (pore-forming). Na(+) contacts are provided by E936 and E939. Over 943–955 (DCMEVAGQAMCLI) the chain is Extracellular. Residues C944 and C953 are joined by a disulfide bond. Residues 956–976 (VFMMVMVIGNLVVLNLFLALL) traverse the membrane as a helical segment. The Cytoplasmic segment spans residues 977–1199 (LSSFSADNLA…TCFLIVEHNW (223 aa)). The segment at 1107–1148 (NLNTEDVSSESDPEGSKDKLDDTSSSEGSTIDIKPEVEEVPV) is disordered. Residues 1180–1495 (LGKSWWILRK…KKYYNAMKKL (316 aa)) form an III repeat. A helical transmembrane segment spans residues 1200-1217 (FETFIIFMILLSSGALAF). Over 1218–1230 (EDIYIEQRKTIRT) the chain is Extracellular. A helical membrane pass occupies residues 1231-1249 (ILEYADKVFTYIFILEMLL). Residues 1250–1263 (KWTAYGFVKFFTNA) lie on the Cytoplasmic side of the membrane. Residues 1264–1282 (WCWLDFLIVAVSLVSLIAN) form a helical membrane-spanning segment. At 1283–1290 (ALGYSELG) the chain is on the extracellular side. The helical transmembrane segment at 1291-1309 (AIKSLRTLRALRPLRALSR) threads the bilayer. The Cytoplasmic segment spans residues 1310-1326 (FEGMRVVVNALVGAIPS). Residues 1327-1346 (IMNVLLVCLIFWLIFSIMGV) form a helical membrane-spanning segment. Topologically, residues 1347-1399 (NLFAGKYHYCFNETSEIRFEIEDVNNKTECEKLMEGNNTEIRWKNVKINFDNV) are extracellular. C1356 and C1376 are oxidised to a cystine. Residues N1358, N1372, and N1383 are each glycosylated (N-linked (GlcNAc...) asparagine). Residues 1400 to 1421 (GAGYLALLQVATFKGWMDIMYA) constitute an intramembrane region (pore-forming). Residues 1422–1438 (AVDSRKPDEQPKYEDNI) are Extracellular-facing. Residues 1439–1460 (YMYIYFVIFIIFGSFFTLNLFI) traverse the membrane as a helical segment. At 1461 to 1523 (GVIIDNFNQQ…IVFDFVTQQA (63 aa)) the chain is on the cytoplasmic side. At S1497 the chain carries Phosphoserine; by PKC. One copy of the IV repeat lies at 1504 to 1801 (IPRPLNKIQG…WEKFDPDATQ (298 aa)). The chain crosses the membrane as a helical span at residues 1524–1541 (FDIVIMMLICLNMVTMMV). Residues 1542 to 1552 (ETDTQSKQMEN) are Extracellular-facing. Residues 1553–1571 (ILYWINLVFVIFFTCECVL) traverse the membrane as a helical segment. Residues 1572-1583 (KMFALRHYYFTI) lie on the Cytoplasmic side of the membrane. Residues 1584 to 1601 (GWNIFDFVVVILSIVGMF) form a helical membrane-spanning segment. Residues 1602-1614 (LADIIEKYFVSPT) are Extracellular-facing. A helical transmembrane segment spans residues 1615-1631 (LFRVIRLARIGRILRLI). The Cytoplasmic portion of the chain corresponds to 1632–1650 (KGAKGIRTLLFALMMSLPA). A helical membrane pass occupies residues 1651–1668 (LFNIGLLLFLVMFIFSIF). Residues 1669–1690 (GMSNFAYVKHEAGIDDMFNFET) lie on the Extracellular side of the membrane. An intramembrane region (pore-forming) is located at residues 1691–1713 (FGNSMICLFQITTSAGWDGLLLP). Residues 1714–1742 (ILNRPPDCSLDKEHPGSGFKGDCGNPSVG) are Extracellular-facing. C1721 and C1736 are oxidised to a cystine. The chain crosses the membrane as a helical span at residues 1743 to 1765 (IFFFVSYIIISFLIVVNMYIAII). The Cytoplasmic portion of the chain corresponds to 1766–1980 (LENFSVATEE…RQKEVRESKC (215 aa)). Residues 1895 to 1924 (EEVSAVVLQRAYRGHLARRGFICKKTTSNK) enclose the IQ domain. A disordered region spans residues 1922 to 1980 (SNKLENGGTHREKKESTPSTASLPSYDSVTKPEKEKQQRAEEGRRERAKRQKEVRESKC). Over residues 1938–1949 (TPSTASLPSYDS) the composition is skewed to polar residues. Residues 1951–1980 (TKPEKEKQQRAEEGRRERAKRQKEVRESKC) show a composition bias toward basic and acidic residues.

This sequence belongs to the sodium channel (TC 1.A.1.10) family. Nav1.6/SCN8A subfamily. In terms of assembly, the voltage-sensitive sodium channel consists of an ion-conducting pore-forming alpha subunit regulated by one or more beta-1 (SCN1B), beta-2 (SCN2B), beta-3 (SCN3B) and/or beta-4 (SCN4B) subunits. Beta-1 (SCN1B) and beta-3 (SCN3B) are non-covalently associated with alpha, while beta-2 (SCN2B) and beta-4 (SCN4B) are covalently linked by disulfide bonds. Interacts with NEDD4 and NEDD4L. Interacts with FGF13. Interacts with FGF14, GBG3, GBB2 and SCN1B. Interacts with TMEM233. Interacts with the conotoxin GVIIJ. Interacts with the spider beta/delta-theraphotoxin-Pre1a. Interacts with CALM1; the interaction modulates the inactivation rate of SCN8A. Post-translationally, may be ubiquitinated by NEDD4L; which would promote its endocytosis. Phosphorylation at Ser-1497 by PKC in a highly conserved cytoplasmic loop slows inactivation of the sodium channel and reduces peak sodium currents. As to expression, expressed in the hippocampus with increased expression in epileptic tissue compared to normal adjacent tissue (at protein level). In terms of tissue distribution, expressed in non-neuronal tissues, such as monocytes/macrophages.

The protein resides in the cell membrane. It localises to the cell projection. Its subcellular location is the axon. It is found in the cytoplasmic vesicle. The protein localises to the podosome. It carries out the reaction Na(+)(in) = Na(+)(out). Inhibited by tetrodotoxin and, more weakly, by its metabolite 4,9-ah-tetrodotoxin. Functionally, pore-forming subunit of a voltage-gated sodium channel complex assuming opened or closed conformations in response to the voltage difference across membranes and through which sodium ions selectively pass along their electrochemical gradient. Contributes to neuronal excitability by regulating action potential threshold and propagation. In terms of biological role, more specifically expressed in non-neuronal cells, could play a role in sodium release from intracellular compartments and participate in the control of podosomes formation and macrophages adhesion and movement. The polypeptide is Sodium channel protein type 8 subunit alpha (Homo sapiens (Human)).